The following is a 299-amino-acid chain: Probable phosphate butyryltransferase (299 aa).

It belongs to the phosphate acetyltransferase and butyryltransferase family.

The enzyme catalyses butanoyl-CoA + phosphate = butanoyl phosphate + CoA. Functionally, catalyzes the conversion of butyryl-CoA through butyryl phosphate to butyrate. This Bacillus subtilis (strain 168) protein is Probable phosphate butyryltransferase (yqiS).